A 460-amino-acid chain; its full sequence is Ribosomal protein uS12 methylthiotransferase RimO (460 aa).

The 115-residue stretch at 16–130 folds into the MTTase N-terminal domain; the sequence is NKIHFISLGC…ILSAIESKEA (115 aa). Residues C25, C61, C93, C164, C168, and C171 each coordinate [4Fe-4S] cluster. The Radical SAM core domain occupies 150-382; sequence STPKHYAYLK…SQTQKKNVEK (233 aa). A TRAM domain is found at 385 to 455; the sequence is KQLVGQIVEA…GYDLVGRVIK (71 aa).

The protein belongs to the methylthiotransferase family. RimO subfamily. The cofactor is [4Fe-4S] cluster.

The protein resides in the cytoplasm. It carries out the reaction L-aspartate(89)-[ribosomal protein uS12]-hydrogen + (sulfur carrier)-SH + AH2 + 2 S-adenosyl-L-methionine = 3-methylsulfanyl-L-aspartate(89)-[ribosomal protein uS12]-hydrogen + (sulfur carrier)-H + 5'-deoxyadenosine + L-methionine + A + S-adenosyl-L-homocysteine + 2 H(+). Its function is as follows. Catalyzes the methylthiolation of an aspartic acid residue of ribosomal protein uS12. This Chlamydia caviae (strain ATCC VR-813 / DSM 19441 / 03DC25 / GPIC) (Chlamydophila caviae) protein is Ribosomal protein uS12 methylthiotransferase RimO.